Consider the following 324-residue polypeptide: IDS-like terpene synthase 3 (324 aa).

The Mg(2+) site is built by D77 and D81.

The protein belongs to the FPP/GGPP synthase family. The cofactor is Mg(2+).

It catalyses the reaction (2E)-geranyl diphosphate + H2O = linalool + diphosphate. The catalysed reaction is (2E,6E)-farnesyl diphosphate + H2O = (6E)-nerolidol + diphosphate. In terms of biological role, terpene synthase that shows monoterpene synthase activity and produces linalool, using geranyl diphosphate (GPP) as substrate. Also shows sesquiterpene synthase activity as it is able to convert farnesyl diphosphate (FPP) into (E)-nerolidol. The polypeptide is IDS-like terpene synthase 3 (Melampsora lini (Rust fungus)).